Reading from the N-terminus, the 349-residue chain is Protein-glutamate methylesterase/protein-glutamine glutaminase 3 (349 aa).

Residues 2 to 119 enclose the Response regulatory domain; it reads DVLIVDDSPV…HPDFERDVES (118 aa). The residue at position 52 (aspartate 52) is a 4-aspartylphosphate. The CheB-type methylesterase domain maps to 157–340; that stretch reads EGFQPGVIAI…LSPPRIAALL (184 aa). Catalysis depends on residues serine 169, histidine 196, and aspartate 289.

The protein belongs to the CheB family. Phosphorylated by CheA. Phosphorylation of the N-terminal regulatory domain activates the methylesterase activity.

It localises to the cytoplasm. The enzyme catalyses [protein]-L-glutamate 5-O-methyl ester + H2O = L-glutamyl-[protein] + methanol + H(+). It catalyses the reaction L-glutaminyl-[protein] + H2O = L-glutamyl-[protein] + NH4(+). Involved in chemotaxis. Part of a chemotaxis signal transduction system that modulates chemotaxis in response to various stimuli. Catalyzes the demethylation of specific methylglutamate residues introduced into the chemoreceptors (methyl-accepting chemotaxis proteins or MCP) by CheR. Also mediates the irreversible deamidation of specific glutamine residues to glutamic acid. The chain is Protein-glutamate methylesterase/protein-glutamine glutaminase 3 from Hahella chejuensis (strain KCTC 2396).